Consider the following 60-residue polypeptide: Prokaryotic ubiquitin-like protein UBact (60 aa).

Positions 1-60 are disordered; that stretch reads MPERKTQPTTDQPWTKPNDGGDESGPRSPEVERPNTRDLLERMKRVDPRQARRYRQRSGE. The span at 29 to 50 shows a compositional bias: basic and acidic residues; sequence PEVERPNTRDLLERMKRVDPRQ. Residues 51–60 show a composition bias toward basic residues; sequence ARRYRQRSGE. Glu60 is covalently cross-linked (Isoglutamyl lysine isopeptide (Glu-Lys) (interchain with K-? in acceptor proteins)).

It belongs to the ubiquitin-like protein UBact family.

Its function is as follows. May function as a protein modifier covalently attached to lysine residues of substrate proteins. This may serve to target the modified proteins for degradation by proteasomes. In Fraserbacteria sp. (strain RBG_16_55_9), this protein is Prokaryotic ubiquitin-like protein UBact.